The chain runs to 177 residues: Inorganic pyrophosphatase (177 aa).

Substrate contacts are provided by K31, R45, and Y57. Positions 67, 72, and 104 each coordinate Mg(2+). Y142 contributes to the substrate binding site.

Belongs to the PPase family. In terms of assembly, homohexamer. Requires Mg(2+) as cofactor.

The protein localises to the cytoplasm. The catalysed reaction is diphosphate + H2O = 2 phosphate + H(+). In terms of biological role, catalyzes the hydrolysis of inorganic pyrophosphate (PPi) forming two phosphate ions. This is Inorganic pyrophosphatase from Neisseria meningitidis serogroup A / serotype 4A (strain DSM 15465 / Z2491).